The chain runs to 439 residues: Protein dumpy-20 (439 aa).

The tract at residues 93–116 is disordered; that stretch reads GTLSDPSLHGSNSSSSTSDVGSSV. The span at 96–116 shows a compositional bias: low complexity; that stretch reads SDPSLHGSNSSSSTSDVGSSV. 2 BED-type zinc fingers span residues 135 to 184 and 349 to 398; these read PTEN…YQKV and KTEH…YNDV. Zn(2+) is bound by residues Cys154, Cys157, His172, His177, Cys368, Cys371, His386, and His391.

Its function is as follows. Involved in cuticle function and is essential for normal morphological development. The sequence is that of Protein dumpy-20 (dpy-20) from Caenorhabditis briggsae.